Consider the following 194-residue polypeptide: Probable molybdenum cofactor guanylyltransferase (194 aa).

GTP-binding positions include 8–10, Lys-20, and Asp-99; that span reads LAG. Asp-99 contributes to the Mg(2+) binding site.

It belongs to the MobA family. Requires Mg(2+) as cofactor.

The protein resides in the cytoplasm. It carries out the reaction Mo-molybdopterin + GTP + H(+) = Mo-molybdopterin guanine dinucleotide + diphosphate. Its function is as follows. Transfers a GMP moiety from GTP to Mo-molybdopterin (Mo-MPT) cofactor (Moco or molybdenum cofactor) to form Mo-molybdopterin guanine dinucleotide (Mo-MGD) cofactor. The polypeptide is Probable molybdenum cofactor guanylyltransferase (Synechococcus elongatus (strain ATCC 33912 / PCC 7942 / FACHB-805) (Anacystis nidulans R2)).